A 581-amino-acid chain; its full sequence is Terpene synthase 2, chloroplastic (581 aa).

Residues 1 to 34 constitute a chloroplast transit peptide; it reads MYSLPGATMSAAPASIISSSSFVEPLLLAAASPA. Substrate is bound by residues Arg299, Asp336, Asp340, and Arg480. Mg(2+) is bound by residues Asp336 and Asp340. A DDXXD motif motif is present at residues 336 to 340; that stretch reads DDIFD. Positions 483, 487, and 491 each coordinate Mg(2+).

The protein belongs to the terpene synthase family. As to quaternary structure, monomer. The cofactor is Mg(2+).

The protein resides in the plastid. It is found in the chloroplast. The enzyme catalyses (2E,6E)-farnesyl diphosphate + H2O = (3S,6E)-nerolidol + diphosphate. The catalysed reaction is (2E,6E,10E)-geranylgeranyl diphosphate + H2O = (6E,10E)-geranyllinalool + diphosphate. It carries out the reaction (2E)-geranyl diphosphate + H2O = (S)-linalool + diphosphate. It functions in the pathway secondary metabolite biosynthesis; terpenoid biosynthesis. Involved in sesquiterpene (C15), diterpene (C20) and monoterpene (C10) biosynthesis. Has sesquiterpene synthase activity, converting farnesyl diphosphate to nerolidol, the precursor of the volatile C11-homoterpene (E)-3,8-dimethyl-1,4,7-nonatriene (DMNT). Has diterpene synthase activity, converting geranylgeranyl diphosphate to (E,E)-geranyllinalool, the precursor of the volatile C16-homoterpene (E,E)-4,8,12-trimethyltrideca 1,3,7,11-tetraene (TMTT). Has monoterpene synthase activity, converting geranyl diphosphate into linalool. Forms only the S-isomers of the three tertiary terpene alcohols. The chain is Terpene synthase 2, chloroplastic from Zea mays (Maize).